A 573-amino-acid chain; its full sequence is MLO-like protein 2 (573 aa).

Topologically, residues 1 to 15 are extracellular; that stretch reads MADQVKERTLEETST. The chain crosses the membrane as a helical span at residues 16–36; sequence WAVAVVCFVLLFISIVLEHSI. Residues 37–61 are Cytoplasmic-facing; it reads HKIGTWFKKKHKQALFEALEKVKAE. A helical transmembrane segment spans residues 62–82; the sequence is LMLLGFISLLLTIGQTPISNI. At 83 to 164 the chain is on the extracellular side; the sequence is CISQKVASTM…VSAYGIHQLH (82 aa). Residues 165 to 185 traverse the membrane as a helical segment; sequence IFIFVLAVVHVVYCIVTYAFG. Residues 186 to 287 are Cytoplasmic-facing; that stretch reads KIKMRTWKSW…KYIQRSLEKD (102 aa). Residues 288–308 form a helical membrane-spanning segment; that stretch reads FKTVVEISPVIWFVAVLFLLT. The Extracellular segment spans residues 309–317; it reads NSYGLRSYL. Residues 318 to 338 traverse the membrane as a helical segment; sequence WLPFIPLVVILIVGTKLEVII. The Cytoplasmic portion of the chain corresponds to 339-371; the sequence is TKLGLRIQEKGDVVRGAPVVQPGDDLFWFGKPR. The chain crosses the membrane as a helical span at residues 372–392; the sequence is FILFLIHLVLFTNAFQLAFFA. Over 393–415 the chain is Extracellular; sequence WSTYEFNLNNCFHESTADVVIRL. A helical transmembrane segment spans residues 416 to 436; the sequence is VVGAVVQILCSYVTLPLYALV. Over 437–573 the chain is Cytoplasmic; sequence TQMGSKMKPT…KSLRDFSFKK (137 aa). The tract at residues 450 to 471 is calmodulin-binding; it reads DRVATALKKWHHTAKNETKHGR. The tract at residues 462-573 is disordered; sequence TAKNETKHGR…KSLRDFSFKK (112 aa). Composition is skewed to polar residues over residues 473-490 and 498-513; these read SGSNTPFSSRPTTPTHGS and NFNNRSVENYPSSPSP. At Ser512 the chain carries Phosphoserine. Positions 522–548 are enriched in basic and acidic residues; it reads EHQFWDPESQHQEAETSTHHSLAHESS.

It belongs to the MLO family.

The protein localises to the membrane. In terms of biological role, may be involved in modulation of pathogen defense and leaf cell death. Activity seems to be regulated by Ca(2+)-dependent calmodulin binding and seems not to require heterotrimeric G proteins. This chain is MLO-like protein 2 (MLO2), found in Arabidopsis thaliana (Mouse-ear cress).